Consider the following 406-residue polypeptide: Phosphoglycerate kinase (406 aa).

Substrate contacts are provided by residues 22–24 (DLN), arginine 37, 60–63 (HLGN), arginine 119, and arginine 152. Residues lysine 202, glutamate 325, and 355–358 (GGDT) each bind ATP.

The protein belongs to the phosphoglycerate kinase family. Monomer.

It localises to the cytoplasm. It catalyses the reaction (2R)-3-phosphoglycerate + ATP = (2R)-3-phospho-glyceroyl phosphate + ADP. Its pathway is carbohydrate degradation; glycolysis; pyruvate from D-glyceraldehyde 3-phosphate: step 2/5. The protein is Phosphoglycerate kinase of Orientia tsutsugamushi (strain Ikeda) (Rickettsia tsutsugamushi).